A 132-amino-acid chain; its full sequence is uncharacterized protein (132 aa).

The next 3 helical transmembrane spans lie at Met18–Ile38, Ile50–Ile70, and Val71–Ile91.

It localises to the cell membrane. This is an uncharacterized protein from Bacillus subtilis (strain 168).